A 312-amino-acid chain; its full sequence is uncharacterized protein (312 aa).

Catalysis depends on charge relay system residues S200, D261, and H292.

The protein belongs to the AB hydrolase superfamily. AB hydrolase 2 family.

This is an uncharacterized protein from Acanthamoeba polyphaga mimivirus (APMV).